The following is a 552-amino-acid chain: MISKINGKLFADMIIQGAQNLSNNADLVDSLNVYPVPDGDTGTNMNLTITSGREEVENNLSQNIGELGKTFSKGLLMGARGNSGVILSQLFRGFCKNIEGEKEISVQQFAESFQAGVETAYKAVMKPVEGTILTVAKDAAKAAMDYVDQAEDCVDLMVHVIEAASESLDNTPNLLAVLKEVGVVDSGGKGLLCVYEGFLKGLKGEKVEAQAPKLDTESFVNDDHDFHGVINTEDIVYGYCTEMMVRFGKNKKAFDEQEFRNDMSEFGDSLLVINDDEIVKVHVHTEHPGDVFNYGQKYGELIKLKVENMREQHREVIRKEQDGIQNKATNESKTVETAIVTISVGDGIAELFKSMGATHIISGGQTMNPSTEDIVKVIEQSKCKRAIILPNNKNIMMASEQAASIVEAETVVIPTKSIPQGISALFQYDQESNLEDNKSHMNDALETVQSGSITFAVRDTKIDGIEIKKDEFMGLAEDKIVISDFNQFHAVKGLLSKLLNEDSEILTMISGEDADNSITNQIIDWIESEYPDVEVEQHEGGQPIYQYFFAVE.

The 193-residue stretch at 8-200 (KLFADMIIQG…LLCVYEGFLK (193 aa)) folds into the DhaL domain.

This is an uncharacterized protein from Staphylococcus epidermidis (strain ATCC 35984 / DSM 28319 / BCRC 17069 / CCUG 31568 / BM 3577 / RP62A).